Here is a 463-residue protein sequence, read N- to C-terminus: Argininosuccinate lyase (463 aa).

It belongs to the lyase 1 family. Argininosuccinate lyase subfamily.

It localises to the cytoplasm. The catalysed reaction is 2-(N(omega)-L-arginino)succinate = fumarate + L-arginine. It participates in amino-acid biosynthesis; L-arginine biosynthesis; L-arginine from L-ornithine and carbamoyl phosphate: step 3/3. The protein is Argininosuccinate lyase of Bacillus cereus (strain AH187).